Consider the following 161-residue polypeptide: MSPQIDLVRRMVEAYNTGKTDDVAEFILHEYLNPGALEHNPELRGPEAFAAAVTWLKYAFSEEAHLEEIGYEENGPWVRAKLALYGRHVGNLVGMPATGRRFSGEQIHLIRIVDGKIRDHRDWPDYLGTYRQLGEPWPTPEGWRPCPPPPRRRHDRSTDTP.

Q106 provides a ligand contact to substrate. The disordered stretch occupies residues 137 to 161 (WPTPEGWRPCPPPPRRRHDRSTDTP).

This sequence belongs to the polyketide cyclase DnrD family. In terms of assembly, homotetramer.

It carries out the reaction methyl aklanonate = aklaviketone. It participates in antibiotic biosynthesis; daunorubicin biosynthesis. It functions in the pathway antibiotic biosynthesis; carminomycin biosynthesis. Its pathway is antibiotic biosynthesis; rhodomycin biosynthesis. The protein operates within antibiotic biosynthesis; aclacinomycin biosynthesis. Functionally, involved in the biosynthesis of aklavinone which is an important precursor common to the formation of the clinically significant anthracyclines such as carminomycin, daunorubicin (daunomycin), rhodomycin, aclacinomycin T (aklavin) and aclacinomycin A (aclarubicin). These compounds are aromatic polyketide antibiotics that exhibit high cytotoxicity and are widely applied in the chemotherapy of a variety of cancers. Catalyzes the cyclization of aklanonic acid methyl ester to yield aklaviketone. The polypeptide is Aklanonic acid methyl ester cyclase DauD (dauD) (Streptomyces sp. (strain C5)).